The chain runs to 158 residues: Phosphopantetheine adenylyltransferase (158 aa).

Thr9 is a binding site for substrate. Residues 9–10 (TF) and His17 each bind ATP. Substrate is bound by residues Lys41, Leu73, and Arg87. ATP contacts are provided by residues 88 to 90 (GLR), Glu98, and 123 to 129 (YAYISSS).

This sequence belongs to the bacterial CoaD family. In terms of assembly, homohexamer. Mg(2+) is required as a cofactor.

It localises to the cytoplasm. The catalysed reaction is (R)-4'-phosphopantetheine + ATP + H(+) = 3'-dephospho-CoA + diphosphate. The protein operates within cofactor biosynthesis; coenzyme A biosynthesis; CoA from (R)-pantothenate: step 4/5. Functionally, reversibly transfers an adenylyl group from ATP to 4'-phosphopantetheine, yielding dephospho-CoA (dPCoA) and pyrophosphate. In Allochromatium vinosum (strain ATCC 17899 / DSM 180 / NBRC 103801 / NCIMB 10441 / D) (Chromatium vinosum), this protein is Phosphopantetheine adenylyltransferase.